Consider the following 125-residue polypeptide: MADLQKIVDDLSSLTVLEAAELAKLLEEKWGVSAAAAVAVAAAPGAGGAAAPAEEKTEFTVVLASAGDKKIEVIKEVRAITGLGLKEAKDLVEGAPKPLKEGVNKEEAEKVKAQLEKAGAKVELK.

Homodimer. Part of the ribosomal stalk of the 50S ribosomal subunit. Forms a multimeric L10(L12)X complex, where L10 forms an elongated spine to which 2 to 4 L12 dimers bind in a sequential fashion. Binds GTP-bound translation factors. Post-translationally, two isoforms seem to exist. One is probably dimethylated on Lys-69 and monomethylated on Lys-86 while the other is probably acetylated or trimethylated on both Lys-86 and Lys-89.

Its function is as follows. Forms part of the ribosomal stalk which helps the ribosome interact with GTP-bound translation factors. Is thus essential for accurate translation. The sequence is that of Large ribosomal subunit protein bL12 from Rhodopseudomonas palustris (strain ATCC BAA-98 / CGA009).